Consider the following 350-residue polypeptide: D-guloside 3-dehydrogenase (350 aa).

It belongs to the zinc-containing alcohol dehydrogenase family. Zn(2+) serves as cofactor.

The catalysed reaction is a D-guloside + NAD(+) = a 3-dehydro-D-guloside + NADH + H(+). Its function is as follows. Catalyzes the NAD(+)-dependent oxidation of the hydroxyl group at C3 of D-gulosides leading to 3-dehydro-D-gulosides. Probably functions in a metabolic pathway that transforms D-gulosides to D-glucosides. Is also able to catalyze the reverse reactions, i.e. the NADH-dependent reduction of the oxo group at C3 of 3-dehydro-D-gulosides leading to D-gulosides. In vitro, can oxidize D-gulose and methyl beta-D-guloside, and reduce methyl alpha-3-dehydro-D-guloside and methyl beta-3-dehydro-D-guloside. However, the actual specific physiological substrates for this metabolic pathway are unknown. In Escherichia coli (strain K12), this protein is D-guloside 3-dehydrogenase (ycjQ).